Here is a 508-residue protein sequence, read N- to C-terminus: ATP synthase subunit alpha, chloroplastic (508 aa).

An ATP-binding site is contributed by 171–178 (GDRQTGKT).

Belongs to the ATPase alpha/beta chains family. F-type ATPases have 2 components, CF(1) - the catalytic core - and CF(0) - the membrane proton channel. CF(1) has five subunits: alpha(3), beta(3), gamma(1), delta(1), epsilon(1). CF(0) has four main subunits: a, b, b' and c.

It localises to the plastid. The protein resides in the chloroplast thylakoid membrane. It carries out the reaction ATP + H2O + 4 H(+)(in) = ADP + phosphate + 5 H(+)(out). Produces ATP from ADP in the presence of a proton gradient across the membrane. The alpha chain is a regulatory subunit. This is ATP synthase subunit alpha, chloroplastic from Gnetum parvifolium (Small-leaved jointfir).